The sequence spans 578 residues: Translation initiation factor eIF2B subunit gamma (578 aa).

S296 and S300 each carry phosphoserine. 2 disordered regions span residues 298–337 (QASF…SATS) and 535–578 (DDSV…LFER). T306 bears the Phosphothreonine mark. Over residues 544–578 (EIAEETDSDDRSDEDSDDSEYTDEYEYEDDGLFER) the composition is skewed to acidic residues.

It belongs to the eIF-2B gamma/epsilon subunits family. In terms of assembly, component of the translation initiation factor 2B (eIF2B) complex which is a heterodecamer of two sets of five different subunits: alpha, beta, gamma, delta and epsilon. Subunits alpha, beta and delta comprise a regulatory subcomplex and subunits epsilon and gamma comprise a catalytic subcomplex. Within the complex, the hexameric regulatory complex resides at the center, with the two heterodimeric catalytic subcomplexes bound on opposite sides.

It localises to the cytoplasm. The protein localises to the cytosol. In terms of biological role, acts as a component of the translation initiation factor 2B (eIF2B) complex, which catalyzes the exchange of GDP for GTP on the eukaryotic initiation factor 2 (eIF2) complex gamma subunit. Its guanine nucleotide exchange factor activity is repressed when bound to eIF2 complex phosphorylated on the alpha subunit, thereby limiting the amount of methionyl-initiator methionine tRNA available to the ribosome and consequently global translation is repressed. It activates the synthesis of GCN4 in yeast under amino acid starvation conditions by suppressing the inhibitory effects of multiple AUG codons present in the leader of GCN4 mRNA. It may promote either repression or activation of GCN4 expression depending on amino acid availability. GCD1 stabilizes the interaction between eIF2 and GCD6 and stimulates the catalytic activity in vitro. The sequence is that of Translation initiation factor eIF2B subunit gamma (GCD1) from Saccharomyces cerevisiae (strain ATCC 204508 / S288c) (Baker's yeast).